The following is a 239-amino-acid chain: Immunoglobulin superfamily member 23 (239 aa).

The segment at 63-93 is disordered; that stretch reads ELEAQPPTSSSPKGLPGRPRTSQEVPNAEDN. Residues 94–179 form the Ig-like domain; sequence PSLIPLVTFP…ELVSEPVTVS (86 aa). A helical membrane pass occupies residues 214–234; the sequence is LIVAATIGGLVLIGSVCFYIL.

The protein resides in the cell membrane. In terms of biological role, may be involved in osteoclast differentiation. This Mus musculus (Mouse) protein is Immunoglobulin superfamily member 23.